A 225-amino-acid polypeptide reads, in one-letter code: Endonuclease V (225 aa).

Residues aspartate 43 and aspartate 110 each coordinate Mg(2+).

The protein belongs to the endonuclease V family. Mg(2+) serves as cofactor.

Its subcellular location is the cytoplasm. The catalysed reaction is Endonucleolytic cleavage at apurinic or apyrimidinic sites to products with a 5'-phosphate.. In terms of biological role, DNA repair enzyme involved in the repair of deaminated bases. Selectively cleaves double-stranded DNA at the second phosphodiester bond 3' to a deoxyinosine leaving behind the intact lesion on the nicked DNA. The polypeptide is Endonuclease V (Thermotoga petrophila (strain ATCC BAA-488 / DSM 13995 / JCM 10881 / RKU-1)).